Reading from the N-terminus, the 190-residue chain is dCTP deaminase (190 aa).

113-118 (KSTYAR) lines the dCTP pocket. Glutamate 139 functions as the Proton donor/acceptor in the catalytic mechanism. DCTP contacts are provided by glutamine 158, tyrosine 172, lysine 181, and glutamine 182.

Belongs to the dCTP deaminase family. In terms of assembly, homotrimer.

The enzyme catalyses dCTP + H2O + H(+) = dUTP + NH4(+). The protein operates within pyrimidine metabolism; dUMP biosynthesis; dUMP from dCTP (dUTP route): step 1/2. Its function is as follows. Catalyzes the deamination of dCTP to dUTP. This chain is dCTP deaminase, found in Chlamydia caviae (strain ATCC VR-813 / DSM 19441 / 03DC25 / GPIC) (Chlamydophila caviae).